A 326-amino-acid chain; its full sequence is MNQSVTRPRPDAKALGKVGVLYGGRSAERDVSLMSGKGVHQALLSAGVDAHLFDTGERTLAELAAAGFDRVFIALHGRYGEDGTLQGALELLGLPYTGSGPMASSLSMDKIMTKRVWLQHGLRTPAFEVLDAQAELRTVPDRLGLPLILKPPHEGSTVGITKVAGYSDMKEGYAQAAKFDDEVLAEQFIAGRELTVAVLGTGAAAHALPVIEIVAPGGNYDYEHKYFSDETQYFCPADLPDAVAAEVADLAVRAYRALGCAGWGRIDFMLDADNRPWLLEANTSPGMTSHSLVPMAAKAIGMSYAELCVSIVSEAACKVHSPARNS.

The 200-residue stretch at 114 to 313 (KRVWLQHGLR…YAELCVSIVS (200 aa)) folds into the ATP-grasp domain. 140–195 (PDRLGLPLILKPPHEGSTVGITKVAGYSDMKEGYAQAAKFDDEVLAEQFIAGRELT) is an ATP binding site. Positions 267, 280, and 282 each coordinate Mg(2+).

This sequence belongs to the D-alanine--D-alanine ligase family. Mg(2+) is required as a cofactor. Mn(2+) serves as cofactor.

The protein resides in the cytoplasm. It catalyses the reaction 2 D-alanine + ATP = D-alanyl-D-alanine + ADP + phosphate + H(+). Its pathway is cell wall biogenesis; peptidoglycan biosynthesis. In terms of biological role, cell wall formation. The polypeptide is D-alanine--D-alanine ligase (Bordetella petrii (strain ATCC BAA-461 / DSM 12804 / CCUG 43448)).